The chain runs to 444 residues: Gamma-glutamyl phosphate reductase (444 aa).

It belongs to the gamma-glutamyl phosphate reductase family.

The protein resides in the cytoplasm. The enzyme catalyses L-glutamate 5-semialdehyde + phosphate + NADP(+) = L-glutamyl 5-phosphate + NADPH + H(+). It participates in amino-acid biosynthesis; L-proline biosynthesis; L-glutamate 5-semialdehyde from L-glutamate: step 2/2. Catalyzes the NADPH-dependent reduction of L-glutamate 5-phosphate into L-glutamate 5-semialdehyde and phosphate. The product spontaneously undergoes cyclization to form 1-pyrroline-5-carboxylate. This Albidiferax ferrireducens (strain ATCC BAA-621 / DSM 15236 / T118) (Rhodoferax ferrireducens) protein is Gamma-glutamyl phosphate reductase.